Consider the following 157-residue polypeptide: 6,7-dimethyl-8-ribityllumazine synthase (157 aa).

Residues Phe26, 60-62 (ALE), and 86-88 (AVI) contribute to the 5-amino-6-(D-ribitylamino)uracil site. Residue 91-92 (ET) participates in (2S)-2-hydroxy-3-oxobutyl phosphate binding. His94 (proton donor) is an active-site residue. Position 119 (Asn119) interacts with 5-amino-6-(D-ribitylamino)uracil. (2S)-2-hydroxy-3-oxobutyl phosphate is bound at residue Arg133.

The protein belongs to the DMRL synthase family.

It catalyses the reaction (2S)-2-hydroxy-3-oxobutyl phosphate + 5-amino-6-(D-ribitylamino)uracil = 6,7-dimethyl-8-(1-D-ribityl)lumazine + phosphate + 2 H2O + H(+). It functions in the pathway cofactor biosynthesis; riboflavin biosynthesis; riboflavin from 2-hydroxy-3-oxobutyl phosphate and 5-amino-6-(D-ribitylamino)uracil: step 1/2. Catalyzes the formation of 6,7-dimethyl-8-ribityllumazine by condensation of 5-amino-6-(D-ribitylamino)uracil with 3,4-dihydroxy-2-butanone 4-phosphate. This is the penultimate step in the biosynthesis of riboflavin. The chain is 6,7-dimethyl-8-ribityllumazine synthase from Laribacter hongkongensis (strain HLHK9).